We begin with the raw amino-acid sequence, 301 residues long: MSATYAPDRILLEKAETLSEALPYIQRYAGKIFVVKYGGHAMGNPDAAQDFAEDIVLLKAIGIHPVVVHGGGPQIGKMLKALGVESQFIDGLRVTDNETAKIAEMVLSGAINKDIVSWIGRAGGRAVGISGKDAKLVEVEKVKKIRKNSTDGQDENIDLGFVGRPVSVDRRLIDTLTQSGMIPVVAPIGVGADGETYNINADTMAGALAAGLEAARLFLLTDVAGVLDADKKLLRTLTPSQIDSLTKADVISGGMIPKLETCIESVKSGVDAAVILDGRVPHSILIELFTEQGAGTLVKLD.

Substrate is bound by residues 71 to 72 (GG), arginine 93, and asparagine 198.

The protein belongs to the acetylglutamate kinase family. ArgB subfamily.

Its subcellular location is the cytoplasm. The enzyme catalyses N-acetyl-L-glutamate + ATP = N-acetyl-L-glutamyl 5-phosphate + ADP. It functions in the pathway amino-acid biosynthesis; L-arginine biosynthesis; N(2)-acetyl-L-ornithine from L-glutamate: step 2/4. Its function is as follows. Catalyzes the ATP-dependent phosphorylation of N-acetyl-L-glutamate. In Zymomonas mobilis subsp. mobilis (strain ATCC 31821 / ZM4 / CP4), this protein is Acetylglutamate kinase.